Here is a 110-residue protein sequence, read N- to C-terminus: uncharacterized protein (110 aa).

Positions 1–20 (MNQQNQKISNPQTPVPTTSE) are enriched in polar residues. Residues 1-24 (MNQQNQKISNPQTPVPTTSEMNDR) form a disordered region.

This is an uncharacterized protein from Bacillus subtilis (strain 168).